Reading from the N-terminus, the 401-residue chain is Argininosuccinate synthase (401 aa).

Position 9–17 (9–17 (AYSGGLDTS)) interacts with ATP. Y88 serves as a coordination point for L-citrulline. G118 serves as a coordination point for ATP. L-aspartate-binding residues include T120, N124, and D125. N124 is a binding site for L-citrulline. The L-citrulline site is built by R128, S177, S186, E262, and Y274.

Belongs to the argininosuccinate synthase family. Type 1 subfamily. As to quaternary structure, homotetramer.

It localises to the cytoplasm. It catalyses the reaction L-citrulline + L-aspartate + ATP = 2-(N(omega)-L-arginino)succinate + AMP + diphosphate + H(+). Its pathway is amino-acid biosynthesis; L-arginine biosynthesis; L-arginine from L-ornithine and carbamoyl phosphate: step 2/3. The protein is Argininosuccinate synthase of Chlorobaculum parvum (strain DSM 263 / NCIMB 8327) (Chlorobium vibrioforme subsp. thiosulfatophilum).